The primary structure comprises 272 residues: Cell division protein FtsQ (272 aa).

The Cytoplasmic portion of the chain corresponds to 1–20 (MSSYAPREIPLDIRLMQGTS). Residues 21–40 (RALFWLVALGCLFVAGHWLM) form a helical membrane-spanning segment. At 41-272 (QRNWWDIRAV…KTPQPAGRKD (232 aa)) the chain is on the periplasmic side. The POTRA domain occupies 45–114 (WDIRAVRLQG…MQLAVTLQAQ (70 aa)).

It belongs to the FtsQ/DivIB family. FtsQ subfamily. In terms of assembly, part of a complex composed of FtsB, FtsL and FtsQ.

It localises to the cell inner membrane. In terms of biological role, essential cell division protein. May link together the upstream cell division proteins, which are predominantly cytoplasmic, with the downstream cell division proteins, which are predominantly periplasmic. May control correct divisome assembly. The chain is Cell division protein FtsQ from Thiomonas arsenitoxydans (strain DSM 22701 / CIP 110005 / 3As).